We begin with the raw amino-acid sequence, 242 residues long: uncharacterized protein (242 aa).

This is an uncharacterized protein from Acanthamoeba polyphaga mimivirus (APMV).